A 1468-amino-acid chain; its full sequence is Centrosomal protein of 290 kDa (1468 aa).

Coiled coils occupy residues 1–25, 52–121, 172–292, 318–528, 559–592, 627–688, and 736–1441; these read ERQL…VGEK, SLSE…IEQA, KMYE…DEKA, VASK…EAQK, RIIL…ILSR, HTLK…QADN, and IKLK…SEQF. Positions 1060-1468 are self-association (with itself or N-terminus); that stretch reads TTGLTVDQVM…QENPVNFPIY (409 aa). A disordered region spans residues 1130–1152; the sequence is LSKDAYSRPSTSGIDSDDHYQRE.

In terms of assembly, part of the tectonic-like complex (also named B9 complex). Interacts with ATF4 via its N-terminal region. Associates with the BBSome complex, interacting (via N-terminus) with BBS4. Interacts with IQCB1/NPHP5; IQCB1 and CEP290/NPHP6 are proposed to form a functional NPHP5-6 module localized to the centrosome. Interacts with NPHP4; the interaction likely requires additional interactors. Interacts with ZNF423, FAM161A, CEP162, CEP162, CEP131, TALPID3, CCDC13, CC2D2A, RPGRIP1. Can self-associate (homo- or heteromeric). Interacts with CCP110; required for suppressing cilia formation. Interacts with RPGR. Associates (via C-terminus) with microtubules; association to microtubule is reduced in response to cellular stress, such as ultraviolet light (UV) radiation or heat shock, in a process that requires p38 MAP kinase signaling. Interacts with FAM161A. Interacts with PCM1. Interacts with CCDC66. Interacts with ARMC9 and CSPP1. In terms of processing, ubiquitinated. May undergo monoubiquitination; monoubiquitination is inhibited in response to cellular stress, such as ultraviolet light (UV) radiation or heat shock, but does not cause its displacement from centriolar satellites.

It localises to the cytoplasm. The protein resides in the cytoskeleton. The protein localises to the microtubule organizing center. Its subcellular location is the centrosome. It is found in the centriolar satellite. It localises to the nucleus. The protein resides in the cell projection. The protein localises to the cilium. Its subcellular location is the cilium basal body. It is found in the centriole. It localises to the cytoplasmic vesicle. Functionally, involved in early and late steps in cilia formation. Its association with CCP110 is required for inhibition of primary cilia formation by CCP110. May play a role in early ciliogenesis in the disappearance of centriolar satellites and in the transition of primary ciliar vesicles (PCVs) to capped ciliary vesicles (CCVs). Required for the centrosomal recruitment of RAB8A and for the targeting of centriole satellite proteins to centrosomes such as of PCM1. Required for the correct localization of ciliary and phototransduction proteins in retinal photoreceptor cells; may play a role in ciliary transport processes. Required for efficient recruitment of RAB8A to primary cilium. In the ciliary transition zone is part of the tectonic-like complex which is required for tissue-specific ciliogenesis and may regulate ciliary membrane composition. Involved in regulation of the BBSome complex integrity, specifically for presence of BBS2, BBS5 and BBS8/TTC8 in the complex, and in ciliary targeting of selected BBSome cargos. May play a role in controlling entry of the BBSome complex to cilia possibly implicating IQCB1/NPHP5. Activates ATF4-mediated transcription. The polypeptide is Centrosomal protein of 290 kDa (CEP290) (Bos taurus (Bovine)).